A 198-amino-acid chain; its full sequence is HTH-type transcriptional regulator BetI (198 aa).

In terms of domain architecture, HTH tetR-type spans 8–68 (PLRRRELIDA…ATMRHLLREL (61 aa)). A DNA-binding region (H-T-H motif) is located at residues 31 to 50 (TVAQIAHEAGVSPALAHHYF).

Its pathway is amine and polyamine biosynthesis; betaine biosynthesis via choline pathway [regulation]. Its function is as follows. Repressor involved in the biosynthesis of the osmoprotectant glycine betaine. It represses transcription of the choline transporter BetT and the genes of BetAB involved in the synthesis of glycine betaine. The polypeptide is HTH-type transcriptional regulator BetI (Brucella melitensis biotype 2 (strain ATCC 23457)).